The following is a 533-amino-acid chain: Peptide chain release factor 3 (533 aa).

The 269-residue stretch at 10–278 folds into the tr-type G domain; sequence EKRRTFAIIS…TFVEIAPPPQ (269 aa). GTP is bound by residues 19-26, 87-91, and 141-144; these read SHPDAGKT, DTPGH, and NKMD.

It belongs to the TRAFAC class translation factor GTPase superfamily. Classic translation factor GTPase family. PrfC subfamily.

The protein resides in the cytoplasm. Functionally, increases the formation of ribosomal termination complexes and stimulates activities of RF-1 and RF-2. It binds guanine nucleotides and has strong preference for UGA stop codons. It may interact directly with the ribosome. The stimulation of RF-1 and RF-2 is significantly reduced by GTP and GDP, but not by GMP. The chain is Peptide chain release factor 3 from Salinibacter ruber (strain DSM 13855 / M31).